A 353-amino-acid polypeptide reads, in one-letter code: Terpene synthase 1 (353 aa).

The DDxx(x)D/E motif motif lies at 81 to 86 (DDAIDA). The NDxxSxxxD/E motif signature appears at 222–230 (NDLVSYEKE).

It belongs to the terpene synthase family.

The enzyme catalyses (2E,6E)-farnesyl diphosphate = (2S,3R,6S,9S)-(-)-protoillud-7-ene + diphosphate. Terpene synthase that converts its substrate farnesyl diphosphate (FPP) into the sesquiterpene protoillud-7-ene. The protein is Terpene synthase 1 of Tieghemostelium lacteum (Slime mold).